Reading from the N-terminus, the 190-residue chain is Xanthine phosphoribosyltransferase (190 aa).

Positions 20 and 27 each coordinate xanthine. 128–132 (ANGKA) contributes to the 5-phospho-alpha-D-ribose 1-diphosphate binding site. Lysine 156 is a binding site for xanthine.

This sequence belongs to the purine/pyrimidine phosphoribosyltransferase family. Xpt subfamily. In terms of assembly, homodimer.

The protein localises to the cytoplasm. It catalyses the reaction XMP + diphosphate = xanthine + 5-phospho-alpha-D-ribose 1-diphosphate. The protein operates within purine metabolism; XMP biosynthesis via salvage pathway; XMP from xanthine: step 1/1. Its function is as follows. Converts the preformed base xanthine, a product of nucleic acid breakdown, to xanthosine 5'-monophosphate (XMP), so it can be reused for RNA or DNA synthesis. This is Xanthine phosphoribosyltransferase from Pseudomonas fluorescens (strain SBW25).